Consider the following 233-residue polypeptide: 2-phytyl-1,4-naphtoquinone methyltransferase (233 aa).

This sequence belongs to the class I-like SAM-binding methyltransferase superfamily. MenG/UbiE family.

The catalysed reaction is demethylphylloquinol + S-adenosyl-L-methionine = phylloquinol + S-adenosyl-L-homocysteine + H(+). Its pathway is cofactor biosynthesis; phylloquinone biosynthesis. Its function is as follows. Methyltransferase required for the conversion of 2-phytyl-1,4-beta-naphthoquinol to phylloquinol. This Synechococcus elongatus (strain ATCC 33912 / PCC 7942 / FACHB-805) (Anacystis nidulans R2) protein is 2-phytyl-1,4-naphtoquinone methyltransferase.